Consider the following 349-residue polypeptide: Phosphoribosylformylglycinamidine cyclo-ligase (349 aa).

Belongs to the AIR synthase family.

It localises to the cytoplasm. It carries out the reaction 2-formamido-N(1)-(5-O-phospho-beta-D-ribosyl)acetamidine + ATP = 5-amino-1-(5-phospho-beta-D-ribosyl)imidazole + ADP + phosphate + H(+). Its pathway is purine metabolism; IMP biosynthesis via de novo pathway; 5-amino-1-(5-phospho-D-ribosyl)imidazole from N(2)-formyl-N(1)-(5-phospho-D-ribosyl)glycinamide: step 2/2. This Albidiferax ferrireducens (strain ATCC BAA-621 / DSM 15236 / T118) (Rhodoferax ferrireducens) protein is Phosphoribosylformylglycinamidine cyclo-ligase.